The chain runs to 245 residues: tRNA pseudouridine synthase A (245 aa).

The active-site Nucleophile is D52. Y111 is a binding site for substrate.

Belongs to the tRNA pseudouridine synthase TruA family. In terms of assembly, homodimer.

The catalysed reaction is uridine(38/39/40) in tRNA = pseudouridine(38/39/40) in tRNA. Its function is as follows. Formation of pseudouridine at positions 38, 39 and 40 in the anticodon stem and loop of transfer RNAs. This Bradyrhizobium sp. (strain BTAi1 / ATCC BAA-1182) protein is tRNA pseudouridine synthase A.